A 106-amino-acid chain; its full sequence is Pyrimidine/purine nucleoside phosphorylase (106 aa).

Belongs to the nucleoside phosphorylase PpnP family.

It carries out the reaction a purine D-ribonucleoside + phosphate = a purine nucleobase + alpha-D-ribose 1-phosphate. The catalysed reaction is adenosine + phosphate = alpha-D-ribose 1-phosphate + adenine. It catalyses the reaction cytidine + phosphate = cytosine + alpha-D-ribose 1-phosphate. The enzyme catalyses guanosine + phosphate = alpha-D-ribose 1-phosphate + guanine. It carries out the reaction inosine + phosphate = alpha-D-ribose 1-phosphate + hypoxanthine. The catalysed reaction is thymidine + phosphate = 2-deoxy-alpha-D-ribose 1-phosphate + thymine. It catalyses the reaction uridine + phosphate = alpha-D-ribose 1-phosphate + uracil. The enzyme catalyses xanthosine + phosphate = alpha-D-ribose 1-phosphate + xanthine. Catalyzes the phosphorolysis of diverse nucleosides, yielding D-ribose 1-phosphate and the respective free bases. Can use uridine, adenosine, guanosine, cytidine, thymidine, inosine and xanthosine as substrates. Also catalyzes the reverse reactions. This chain is Pyrimidine/purine nucleoside phosphorylase, found in Burkholderia ambifaria (strain ATCC BAA-244 / DSM 16087 / CCUG 44356 / LMG 19182 / AMMD) (Burkholderia cepacia (strain AMMD)).